The primary structure comprises 90 residues: Small ribosomal subunit protein bS16 (90 aa).

It belongs to the bacterial ribosomal protein bS16 family.

The chain is Small ribosomal subunit protein bS16 from Lactococcus lactis subsp. cremoris (strain MG1363).